The sequence spans 265 residues: Protein B8 (265 aa).

The protein is Protein B8 (B8) of Homo sapiens (Human).